The primary structure comprises 274 residues: 2,3,4,5-tetrahydropyridine-2,6-dicarboxylate N-succinyltransferase (274 aa).

Residues R104 and D141 each coordinate substrate.

Belongs to the transferase hexapeptide repeat family. Homotrimer.

Its subcellular location is the cytoplasm. The enzyme catalyses (S)-2,3,4,5-tetrahydrodipicolinate + succinyl-CoA + H2O = (S)-2-succinylamino-6-oxoheptanedioate + CoA. Its pathway is amino-acid biosynthesis; L-lysine biosynthesis via DAP pathway; LL-2,6-diaminopimelate from (S)-tetrahydrodipicolinate (succinylase route): step 1/3. This Salmonella arizonae (strain ATCC BAA-731 / CDC346-86 / RSK2980) protein is 2,3,4,5-tetrahydropyridine-2,6-dicarboxylate N-succinyltransferase.